We begin with the raw amino-acid sequence, 529 residues long: UDP-glucuronosyltransferase 2B7 (529 aa).

The first 23 residues, 1–23 (MSVKWTSVILLIQLSFCFSSGNC), serve as a signal peptide directing secretion. 3 N-linked (GlcNAc...) asparagine glycosylation sites follow: Asn67, Asn68, and Asn315. UDP-alpha-D-glucuronate-binding positions include 373-379 (THGGANG) and Asp398. A helical transmembrane segment spans residues 493 to 509 (VIGFLLVCVATVIFIVT).

It belongs to the UDP-glycosyltransferase family.

Its subcellular location is the endoplasmic reticulum membrane. It catalyses the reaction glucuronate acceptor + UDP-alpha-D-glucuronate = acceptor beta-D-glucuronoside + UDP + H(+). The catalysed reaction is 17alpha-estradiol + UDP-alpha-D-glucuronate = 17alpha-estradiol 17-O-(beta-D-glucuronate) + UDP + H(+). It carries out the reaction 17beta-estradiol + UDP-alpha-D-glucuronate = 17beta-estradiol 17-O-(beta-D-glucuronate) + UDP + H(+). The enzyme catalyses 2-hydroxy-17beta-estradiol + UDP-alpha-D-glucuronate = 2-hydroxy-17beta-estradiol 3-O-(beta-D-glucuronate) + UDP + H(+). It catalyses the reaction 4-hydroxy-17beta-estradiol + UDP-alpha-D-glucuronate = 17beta-estradiol 4-O-(beta-D-glucuronate) + UDP + H(+). The catalysed reaction is 4-hydroxyestrone + UDP-alpha-D-glucuronate = estrone 4-O-(beta-D-glucuronate) + UDP + H(+). It carries out the reaction 16alpha-hydroxyestrone + UDP-alpha-D-glucuronate = 16alpha-hydroxyestrone 16-O-(beta-D-glucuronate) + UDP + H(+). The enzyme catalyses 16alpha,17beta-estriol + UDP-alpha-D-glucuronate = 16alpha,17beta-estriol 16-O-(beta-D-glucuronate) + UDP + H(+). It catalyses the reaction 16beta,17beta-estriol + UDP-alpha-D-glucuronate = 16beta,17beta-estriol 16-O-(beta-D-glucuronate) + UDP + H(+). The catalysed reaction is 16alpha,17alpha-estriol + UDP-alpha-D-glucuronate = 16alpha,17alpha-estriol 16-O-(beta-D-glucuronate) + UDP + H(+). It carries out the reaction 16alpha,17alpha-estriol + UDP-alpha-D-glucuronate = 16alpha,17alpha-estriol 17-O-(beta-D-glucuronate) + UDP + H(+). The enzyme catalyses epitestosterone + UDP-alpha-D-glucuronate = epitestosterone 17-O-(beta-D-glucuronate) + UDP + H(+). It catalyses the reaction hyodeoxycholate + UDP-alpha-D-glucuronate = hyodeoxycholate 6-O-(beta-D-glucuronate) + UDP + H(+). The catalysed reaction is hyocholate + UDP-alpha-D-glucuronate = hyocholate 6-O-(beta-D-glucuronate) + UDP + H(+). It carries out the reaction all-trans-retinoate + UDP-alpha-D-glucuronate = all-trans-retinoyl-1-O-(beta-D-glucuronate) + UDP. The enzyme catalyses all-trans-4-hydroxyretinoate + UDP-alpha-D-glucuronate = all-trans-4-hydroxy-4-O-(beta-D-glucuronide)-retinoate + UDP + H(+). It catalyses the reaction (E)-ferulate + UDP-alpha-D-glucuronate = (E)-ferulic acid beta-D-glucuronate ester + UDP. The catalysed reaction is 8-iso-prostaglandin F2alpha + UDP-alpha-D-glucuronate = 8-iso-prostaglandin F2alpha-glucuronide + UDP + H(+). It carries out the reaction 5-epi-5-F2t-IsoP + UDP-alpha-D-glucuronate = 5-epi-5-F2t-IsoP-glucuronide + UDP + H(+). The enzyme catalyses (5Z,8Z,11Z,14Z)-eicosatetraenoate + UDP-alpha-D-glucuronate = O-[(5Z),(8Z),(11Z),(14Z)-eicosatetraenoyl]-beta-D-glucuronate + UDP. It catalyses the reaction 15-hydroxy-(5Z,8Z,11Z,13E)-eicosatetraenoate + UDP-alpha-D-glucuronate = 15-O-(beta-D-glucuronosyl)-(5Z,8Z,11Z,14Z)-eicosatetraenoate + UDP + H(+). The catalysed reaction is 20-hydroxy-(5Z,8Z,11Z,14Z)-eicosatetraenoate + UDP-alpha-D-glucuronate = 20-O-(beta-D-glucuronosyl)-(5Z,8Z,11Z,14Z)-eicosatetraenoate + UDP + H(+). It carries out the reaction (E)-ferulate + UDP-alpha-D-glucuronate = (E)-4-O-(beta-D-glucuronosyl)-ferulate + UDP + H(+). The enzyme catalyses prostaglandin B1 + UDP-alpha-D-glucuronate = 15-O-(beta-D-glucuronosyl)-prostaglandin B1 + UDP + H(+). It catalyses the reaction mycophenolate + UDP-alpha-D-glucuronate = mycophenolic acid O-acyl-beta-D-glucuronide + UDP. The catalysed reaction is losartan + UDP-alpha-D-glucuronate = losartan-2-N-beta-D-glucuronide + UDP. It carries out the reaction candesartan + UDP-alpha-D-glucuronate = candesartan O-beta-D-glucuronoside + UDP. The enzyme catalyses candesartan + UDP-alpha-D-glucuronate = candesartan-2-N-beta-D-glucuronide + UDP. It catalyses the reaction zolasartan + UDP-alpha-D-glucuronate = zolarsartan O-beta-D-glucuronoside + UDP. Its function is as follows. UDP-glucuronosyltransferase (UGT) that catalyzes phase II biotransformation reactions in which lipophilic substrates are conjugated with glucuronic acid to increase the metabolite's water solubility, thereby facilitating excretion into either the urine or bile. Essential for the elimination and detoxification of drugs, xenobiotics and endogenous compounds. Catalyzes the glucuronidation of endogenous steroid hormones such as androgens (epitestosterone, androsterone) and estrogens (estradiol, epiestradiol, estriol, catechol estrogens). Also regulates the levels of retinoic acid, a major metabolite of vitamin A involved in apoptosis, cellular growth and differentiation, and embryonic development. Contributes to bile acid (BA) detoxification by catalyzing the glucuronidation of BA substrates, which are natural detergents for dietary lipids absorption. Involved in the glucuronidation of arachidonic acid (AA) and AA-derived eicosanoids including 15-HETE, 20-HETE, PGE2, PGB1 and F2-isoprostanes (8-iso-PGF2alpha and 5-epi-5-F2t-IsoP). Involved in the glucuronidation of the phytochemical ferulic acid at the phenolic or the carboxylic acid group. Involved in the glucuronidation of the AGTR1 angiotensin receptor antagonist losartan, caderastan and zolarsatan, drugs which can inhibit the effect of angiotensin II. Also metabolizes mycophenolate, an immunosuppressive agent. The chain is UDP-glucuronosyltransferase 2B7 from Homo sapiens (Human).